An 81-amino-acid polypeptide reads, in one-letter code: Photosystem I iron-sulfur center (81 aa).

4Fe-4S ferredoxin-type domains follow at residues 2–31 (AHSV…MIPW) and 39–68 (IASA…VRVY). 8 residues coordinate [4Fe-4S] cluster: Cys-11, Cys-14, Cys-17, Cys-21, Cys-48, Cys-51, Cys-54, and Cys-58.

As to quaternary structure, the eukaryotic PSI reaction center is composed of at least 11 subunits. [4Fe-4S] cluster serves as cofactor.

It localises to the plastid. The protein resides in the chloroplast thylakoid membrane. It catalyses the reaction reduced [plastocyanin] + hnu + oxidized [2Fe-2S]-[ferredoxin] = oxidized [plastocyanin] + reduced [2Fe-2S]-[ferredoxin]. Apoprotein for the two 4Fe-4S centers FA and FB of photosystem I (PSI); essential for photochemical activity. FB is the terminal electron acceptor of PSI, donating electrons to ferredoxin. The C-terminus interacts with PsaA/B/D and helps assemble the protein into the PSI complex. Required for binding of PsaD and PsaE to PSI. PSI is a plastocyanin-ferredoxin oxidoreductase, converting photonic excitation into a charge separation, which transfers an electron from the donor P700 chlorophyll pair to the spectroscopically characterized acceptors A0, A1, FX, FA and FB in turn. This Staurastrum punctulatum (Green alga) protein is Photosystem I iron-sulfur center.